Here is a 434-residue protein sequence, read N- to C-terminus: MTVTDIARRVYNHTWKLDPICRSLLDTDFYKLLMLQMIWGLYQDVDATFSLTNRNHRVRLADEIDEAELRAQLDHARTIRFSKKEMIWLAGNSFYGRKQIFSPEFLAWLADFQLPEYELRRRDGQFELHFYGRWMETTMWEIPALAIINELRSRAAMRTLGRFALDVLYARAKAKVWEKVERLKKYPDIRISDFGTRRRHSFLWQRWCVEALKEGIGESFTGTSNVLLAMDTDLEALGTNAHELPMVLAALSSSDEELKASPYQVLKDWQSYYGGNLLIVLPDTFGTESFLEDAPGWVADWTGFRPDSAPPIEGGERIISWWEQHGRDPREKLLIFSDALDVDTIEQTYRHFKGRSRLSFGWGTNLTNDFDGCAPEKIDRLKAISLVCKVSSANGRPAVKLSDNPEKATGRPEEIQRYLRVFGSRNRVHQPVEV.

His242 carries the phosphohistidine; by autocatalysis modification.

Belongs to the NAPRTase family. Post-translationally, transiently phosphorylated on a His residue during the reaction cycle. Phosphorylation strongly increases the affinity for substrates and increases the rate of nicotinate D-ribonucleotide production. Dephosphorylation regenerates the low-affinity form of the enzyme, leading to product release.

The enzyme catalyses nicotinate + 5-phospho-alpha-D-ribose 1-diphosphate + ATP + H2O = nicotinate beta-D-ribonucleotide + ADP + phosphate + diphosphate. The protein operates within cofactor biosynthesis; NAD(+) biosynthesis; nicotinate D-ribonucleotide from nicotinate: step 1/1. Catalyzes the synthesis of beta-nicotinate D-ribonucleotide from nicotinate and 5-phospho-D-ribose 1-phosphate at the expense of ATP. The protein is Nicotinate phosphoribosyltransferase of Chelativorans sp. (strain BNC1).